Reading from the N-terminus, the 436-residue chain is Cyclin-A2-2 (436 aa).

The protein belongs to the cyclin family. Cyclin AB subfamily. Expressed in roots, stems, leaves, flowers and siliques.

The polypeptide is Cyclin-A2-2 (CYCA2-2) (Arabidopsis thaliana (Mouse-ear cress)).